The chain runs to 143 residues: Large ribosomal subunit protein uL11 (143 aa).

Belongs to the universal ribosomal protein uL11 family. As to quaternary structure, part of the ribosomal stalk of the 50S ribosomal subunit. Interacts with L10 and the large rRNA to form the base of the stalk. L10 forms an elongated spine to which L12 dimers bind in a sequential fashion forming a multimeric L10(L12)X complex. Post-translationally, one or more lysine residues are methylated.

Functionally, forms part of the ribosomal stalk which helps the ribosome interact with GTP-bound translation factors. This chain is Large ribosomal subunit protein uL11, found in Methylibium petroleiphilum (strain ATCC BAA-1232 / LMG 22953 / PM1).